Consider the following 603-residue polypeptide: Elongation factor 4 (603 aa).

The tr-type G domain occupies 9–191; that stretch reads SNIRNFSIIA…RIVRQIPPPK (183 aa). Residues 21 to 26 and 138 to 141 each bind GTP; these read DHGKST and NKID.

This sequence belongs to the TRAFAC class translation factor GTPase superfamily. Classic translation factor GTPase family. LepA subfamily.

It is found in the cell inner membrane. The catalysed reaction is GTP + H2O = GDP + phosphate + H(+). Required for accurate and efficient protein synthesis under certain stress conditions. May act as a fidelity factor of the translation reaction, by catalyzing a one-codon backward translocation of tRNAs on improperly translocated ribosomes. Back-translocation proceeds from a post-translocation (POST) complex to a pre-translocation (PRE) complex, thus giving elongation factor G a second chance to translocate the tRNAs correctly. Binds to ribosomes in a GTP-dependent manner. The polypeptide is Elongation factor 4 (Idiomarina loihiensis (strain ATCC BAA-735 / DSM 15497 / L2-TR)).